The primary structure comprises 591 residues: MMRSHYCGQLNESLDGQEVTLCGWVHRRRDHGGVIFLDIRDREGMAQVVFDPDRAETFAAADRVRSEYVVQITGKVRKRPEGAVNANMASGAIEILGYQLNVLNEAETPPFPLNEYSDVGEETRLRYRFIDLRRPEMADKLRLRSRITSSIRRFLDENGFLDVETPILTRATPEGARDYLVPSRTHAGSFFALPQSPQLFKQLLMVAGFDRYYQIAKCFRDEDLRADRQPEFTQIDIETSFLDESEIMGLTESMIRKLFKEVLDLEFGEFPHMTFEEAMRRYGSDKPDLRIPLELVDVADQLKDVDFKVFAGPANDPKCRVTALRLPGGASMPRSKIDEYTKFVGIYGAKGLAYIKVNERAKGVEGLQSPIVKNIPEANLNNILDRVGAVDGDIVFFGADKFKVVSEALGALRIRLGHDFELLTCEWAPMWVVDFPMFEENEDGSFTALHHPFTAPKCTPEELEANPATALSRAYDMVLNGTELGGGSIRIHRKEMQQAVFRLLGIEAEEQEEKFGFLLDALKFGAPPHGGLAFGLDRLVMLMTGAQSIREVIAFPKTQSAACVMTQAPGMVDAKALRELHIRLREQTKVE.

Residue glutamate 174 participates in L-aspartate binding. Residues 198 to 201 (QLFK) are aspartate. Arginine 220 provides a ligand contact to L-aspartate. Residues 220–222 (RDE) and glutamine 229 each bind ATP. Position 450 (histidine 450) interacts with L-aspartate. An ATP-binding site is contributed by glutamate 483. Arginine 490 lines the L-aspartate pocket. 535-538 (GLDR) is an ATP binding site.

It belongs to the class-II aminoacyl-tRNA synthetase family. Type 1 subfamily. In terms of assembly, homodimer.

The protein resides in the cytoplasm. The catalysed reaction is tRNA(Asx) + L-aspartate + ATP = L-aspartyl-tRNA(Asx) + AMP + diphosphate. Its function is as follows. Aspartyl-tRNA synthetase with relaxed tRNA specificity since it is able to aspartylate not only its cognate tRNA(Asp) but also tRNA(Asn). Reaction proceeds in two steps: L-aspartate is first activated by ATP to form Asp-AMP and then transferred to the acceptor end of tRNA(Asp/Asn). This chain is Aspartate--tRNA(Asp/Asn) ligase, found in Pseudomonas putida (strain ATCC 700007 / DSM 6899 / JCM 31910 / BCRC 17059 / LMG 24140 / F1).